Consider the following 249-residue polypeptide: Eukaryotic translation initiation factor 3 subunit J-A (249 aa).

The segment covering 1 to 15 (MADADSWDADSFEPE) has biased composition (acidic residues). The tract at residues 1-104 (MADADSWDAD…DTPLTPEDEL (104 aa)) is disordered. Positions 16-27 (EPIKKAAVHDKW) are enriched in basic and acidic residues. The segment covering 28–52 (EGEDEDDDVKDNWDDDEEEEKEEEE) has biased composition (acidic residues). Positions 34 to 96 (DDVKDNWDDD…QQLEETKRDT (63 aa)) form a coiled coil. Positions 53-96 (EKKTEAKPTEKKKLSEKIKEKENLQRKKQEELRKQQLEETKRDT) are enriched in basic and acidic residues.

It belongs to the eIF-3 subunit J family. In terms of assembly, component of the eukaryotic translation initiation factor 3 (eIF-3) complex, which is composed of 13 subunits: eif3a, eif3b, eif3c, eif3d, eif3e, eif3f, eif3g, eif3h, eif3i, eif3j, eif3k, eif3l and eif3m.

The protein resides in the cytoplasm. Functionally, component of the eukaryotic translation initiation factor 3 (eIF-3) complex, which is involved in protein synthesis of a specialized repertoire of mRNAs and, together with other initiation factors, stimulates binding of mRNA and methionyl-tRNAi to the 40S ribosome. The eIF-3 complex specifically targets and initiates translation of a subset of mRNAs involved in cell proliferation. This Danio rerio (Zebrafish) protein is Eukaryotic translation initiation factor 3 subunit J-A (eif3ja).